A 65-amino-acid chain; its full sequence is UPF0434 protein CPS_2127 (65 aa).

Belongs to the UPF0434 family.

This is UPF0434 protein CPS_2127 from Colwellia psychrerythraea (strain 34H / ATCC BAA-681) (Vibrio psychroerythus).